Consider the following 874-residue polypeptide: Oxysterol-binding protein-related protein 5 (874 aa).

Residues 1–71 are disordered; sequence MKEEAFLRRR…PQTPGSATKV (71 aa). Ser-12 is modified (phosphoserine). Residues 93–123 are a coiled coil; the sequence is VSKKDALKAQKENYRQEKKRATKQLFSALTD. The PH domain occupies 126–243; it reads VVIMADSLKI…WLDALELALR (118 aa). Disordered stretches follow at residues 255 to 277 and 299 to 338; these read QGRDGEQGSSPDASPSSLYGLPT and FSDKSERENAEDSDAETQDHSRKTNESGSDLLDSPGGPWR. Residues 261 to 277 are compositionally biased toward polar residues; the sequence is QGSSPDASPSSLYGLPT. Residues 299-308 show a composition bias toward basic and acidic residues; sequence FSDKSERENA. A 1,2-diacyl-sn-glycero-3-phospho-(1D-myo-inositol 4-phosphate) contacts are provided by residues 383 to 388, 445 to 448, and 477 to 478; these read LSRVVL, KPYN, and HH. A 1,2-diacyl-sn-glycero-3-phospho-L-serine is bound by residues 383 to 388 and Asn-448; that span reads LSRVVL. Ser-503 is an a 1,2-diacyl-sn-glycero-3-phospho-L-serine binding site. Over residues 660-684 the composition is skewed to basic and acidic residues; sequence GDQHKATQEKSVLEEAQRQRAREHQ. Disordered stretches follow at residues 660 to 685 and 739 to 798; these read GDQHKATQEKSVLEEAQRQRAREHQQ and GQTT…GGES. A 1,2-diacyl-sn-glycero-3-phospho-(1D-myo-inositol 4-phosphate) contacts are provided by Lys-669, Glu-673, and Arg-677. 2 positions are modified to phosphoserine: Ser-746 and Ser-749. Residues 754 to 764 are compositionally biased toward basic and acidic residues; it reads PSSDRRLRKAS. The span at 765 to 782 shows a compositional bias: polar residues; it reads DQPSGHSQVTESSGSTPE. Residues 855-873 traverse the membrane as a helical segment; it reads SWFLLCIFLTCQLFINYIL.

This sequence belongs to the OSBP family.

It localises to the endoplasmic reticulum membrane. Functionally, lipid transporter involved in lipid countertransport between the endoplasmic reticulum and the plasma membrane: specifically exchanges phosphatidylserine with phosphatidylinositol 4-phosphate (PI4P), delivering phosphatidylserine to the plasma membrane in exchange for PI4P, which is degraded by the SAC1/SACM1L phosphatase in the endoplasmic reticulum. Binds phosphatidylserine and PI4P in a mutually exclusive manner. May cooperate with NPC1 to mediate the exit of cholesterol from endosomes/lysosomes. Binds 25-hydroxycholesterol and cholesterol. The polypeptide is Oxysterol-binding protein-related protein 5 (Osbpl5) (Mus musculus (Mouse)).